The chain runs to 96 residues: Small ribosomal subunit protein bS6 (96 aa).

This sequence belongs to the bacterial ribosomal protein bS6 family.

In terms of biological role, binds together with bS18 to 16S ribosomal RNA. In Streptococcus equi subsp. zooepidemicus (strain MGCS10565), this protein is Small ribosomal subunit protein bS6.